Reading from the N-terminus, the 333-residue chain is Heat shock transcription factor, X-linked member 4 (333 aa).

The interval 1-66 is disordered; sequence MASQNTEQEY…QDNSPPEDRN (66 aa). Over residues 29–39 the composition is skewed to low complexity; it reads GSSPDPNPDSS. The segment covering 49–60 has biased composition (polar residues); that stretch reads AMSQDPGSQDNS. The DNA-binding element occupies 79–182; sequence FRLSFPRKLW…PRLLENIQRK (104 aa). The segment at 227–275 is disordered; that stretch reads QGAPSVQGPSGTQSFRRSGMWSKKSATRHPLGNGPPQEPNGPSWEGTSG. The segment covering 228–242 has biased composition (polar residues); sequence GAPSVQGPSGTQSFR.

Belongs to the HSF family.

It is found in the nucleus. This chain is Heat shock transcription factor, X-linked member 4, found in Homo sapiens (Human).